We begin with the raw amino-acid sequence, 138 residues long: Cysteine desulfuration protein SufE (138 aa).

Residue Cys-51 is the Cysteine persulfide intermediate of the active site.

Belongs to the SufE family. Homodimer. Interacts with SufS.

Its subcellular location is the cytoplasm. Its pathway is cofactor biosynthesis; iron-sulfur cluster biosynthesis. Functionally, participates in cysteine desulfuration mediated by SufS. Cysteine desulfuration mobilizes sulfur from L-cysteine to yield L-alanine and constitutes an essential step in sulfur metabolism for biosynthesis of a variety of sulfur-containing biomolecules. Functions as a sulfur acceptor for SufS, by mediating the direct transfer of the sulfur atom from the S-sulfanylcysteine of SufS, an intermediate product of cysteine desulfuration process. The sequence is that of Cysteine desulfuration protein SufE from Shigella sonnei (strain Ss046).